The sequence spans 876 residues: MSKSTAEIRQAFLDFFHSKGHQVVASSSLVPNNDPTLLFTNAGMNQFKDVFLGLDKRNYSRATTSQRCVRAGGKHNDLENVGYTARHHTFFEMLGNFSFGDYFKHDAIQFAWELLTGENWFALPKERLWVTVYETDDEAYEIWEKEVGIPRERIIRIGDNKGAPYASDNFWQMGDTGPCGPCTEIFYDHGDHIWGGPPGSPEEDGDRYIEIWNIVFMQFNRQADGAMEPLPKPSVDTGMGLERIAAVLQHVNSNYDIDLFRTLIEAVAKVTGATDLGNKSLRVIADHIRSCAFLVADGVLPSNENRGYVLRRIIRRAVRHGNMLGAKETFFYKLVGPLIEVMGSAGEELKRQQAQVEQVLKTEEEQFARTLERGLALLDEELAKLQGDTLDGETAFRLYDTYGFPVDLTADVCRERNIKVDEAGFEAAMEEQRRRAREASGFGADYNAMIRVDSASEFKGYDHLELNGKVTALFVDGKAVEAINAGQEAVVVLDQTPFYAESGGQVGDKGELKGAGFTFSVDDTQKYGQAIGHLGKLSAGALKVGDAVQADVDEARRARIRLNHSATHLMHAALRQVLGTHVAQKGSLVSDKVLRFDFSHNEAMKPSEIREVEDLVNAQIRRNLPIETNIMDLDAAKAKGAMALFGEKYDERVRVLSMGDFSTELCGGTHASRTGDIGLFRIISESGTAAGIRRIEAVTGEGAMATVHAQSDRLNDIAHLLKGDSQNLGDKVRAVLERTRQLEKELQQLKDQAAAQESANLSSKAVDLNGVKLLVSELAGIEPKMLRTMVDDLKNQLGSTVIVLATVVEGKVSLIAGVSKDVTDRVKAGELIGMVAQQVGGKGGGRPDMAQAGGTDAAALPAALASVQGWVSAKLQ.

Zn(2+) is bound by residues H564, H568, C666, and H670.

This sequence belongs to the class-II aminoacyl-tRNA synthetase family. In terms of assembly, homotetramer. The cofactor is Zn(2+).

It is found in the cytoplasm. The enzyme catalyses tRNA(Ala) + L-alanine + ATP = L-alanyl-tRNA(Ala) + AMP + diphosphate. In terms of biological role, catalyzes the attachment of alanine to tRNA(Ala) in a two-step reaction: alanine is first activated by ATP to form Ala-AMP and then transferred to the acceptor end of tRNA(Ala). Also edits incorrectly charged Ser-tRNA(Ala) and Gly-tRNA(Ala) via its editing domain. This chain is Alanine--tRNA ligase, found in Salmonella paratyphi B (strain ATCC BAA-1250 / SPB7).